The sequence spans 152 residues: Ribosome maturation factor RimP (152 aa).

It belongs to the RimP family.

It is found in the cytoplasm. Functionally, required for maturation of 30S ribosomal subunits. In Desulfitobacterium hafniense (strain DSM 10664 / DCB-2), this protein is Ribosome maturation factor RimP.